Consider the following 362-residue polypeptide: Phosphoserine aminotransferase (362 aa).

R43 contributes to the L-glutamate binding site. Residues 77-78 (AT), W103, T153, D173, and Q196 each bind pyridoxal 5'-phosphate. At K197 the chain carries N6-(pyridoxal phosphate)lysine. A pyridoxal 5'-phosphate-binding site is contributed by 238–239 (NT).

This sequence belongs to the class-V pyridoxal-phosphate-dependent aminotransferase family. SerC subfamily. As to quaternary structure, homodimer. Requires pyridoxal 5'-phosphate as cofactor.

Its subcellular location is the cytoplasm. It carries out the reaction O-phospho-L-serine + 2-oxoglutarate = 3-phosphooxypyruvate + L-glutamate. The enzyme catalyses 4-(phosphooxy)-L-threonine + 2-oxoglutarate = (R)-3-hydroxy-2-oxo-4-phosphooxybutanoate + L-glutamate. The protein operates within amino-acid biosynthesis; L-serine biosynthesis; L-serine from 3-phospho-D-glycerate: step 2/3. It functions in the pathway cofactor biosynthesis; pyridoxine 5'-phosphate biosynthesis; pyridoxine 5'-phosphate from D-erythrose 4-phosphate: step 3/5. Its function is as follows. Catalyzes the reversible conversion of 3-phosphohydroxypyruvate to phosphoserine and of 3-hydroxy-2-oxo-4-phosphonooxybutanoate to phosphohydroxythreonine. This Xylella fastidiosa (strain 9a5c) protein is Phosphoserine aminotransferase.